Consider the following 285-residue polypeptide: MPPTVRQGIRTVGTLRVTRPSSYVLSSREFSVLNRPPPNYPGHIPLTTIERGALAVGSAIGSLLNPRRADLIAALGEATATPYFIYRLRDAMLSNPTGRRILRDRPRISSKTLSVEYLRSLPPNSVGRTYVNWLDREGVGPDSRETVRYIDDEECAYVMQRYRECHDFYHAVTGLPIVVEGEVALKTFEFANTLLPMTGLSMFAVMRLKPEERERYWELHLPWAVRSGLASKEVINVYWEEELERDVNELREKLGIEKPPDLREIRKMMRRQKKAAEAAREKYQN.

The transit peptide at 1–11 directs the protein to the mitochondrion; it reads MPPTVRQGIRT. 4 residues coordinate Zn(2+): His166, Asp167, His170, and Glu182.

It belongs to the COQ4 family. As to quaternary structure, component of a multi-subunit COQ enzyme complex, composed of at least COQ3, COQ4, COQ5, COQ6, COQ7 and COQ9. The cofactor is Zn(2+).

It is found in the mitochondrion inner membrane. The enzyme catalyses a 4-hydroxy-3-methoxy-5-(all-trans-polyprenyl)benzoate + H(+) = a 2-methoxy-6-(all-trans-polyprenyl)phenol + CO2. Its pathway is cofactor biosynthesis; ubiquinone biosynthesis. Functionally, lyase that catalyzes the C1-decarboxylation of 4-hydroxy-3-methoxy-5-(all-trans-polyprenyl)benzoic acid into 2-methoxy-6-(all-trans-polyprenyl)phenol during ubiquinone biosynthesis. The sequence is that of Ubiquinone biosynthesis protein COQ4, mitochondrial from Paracoccidioides brasiliensis (strain Pb18).